The chain runs to 329 residues: Probable carboxylesterase 8 (329 aa).

Positions 73–75 (HGG) match the Involved in the stabilization of the negatively charged intermediate by the formation of the oxyanion hole motif. Catalysis depends on residues Ser-161, Asp-264, and His-294.

Belongs to the 'GDXG' lipolytic enzyme family. As to expression, expressed in leaves, stems, flowers and siliques.

It carries out the reaction a carboxylic ester + H2O = an alcohol + a carboxylate + H(+). In terms of biological role, carboxylesterase acting on esters with varying acyl chain length. The sequence is that of Probable carboxylesterase 8 (CXE8) from Arabidopsis thaliana (Mouse-ear cress).